The sequence spans 418 residues: Ceramide synthase LAC1 (418 aa).

A compositionally biased stretch (polar residues) spans 1–14; that stretch reads MSTIKPSPSNNNLK. A disordered region spans residues 1–25; sequence MSTIKPSPSNNNLKVRSRPRRKSSI. The residue at position 2 (serine 2) is an N-acetylserine. The Cytoplasmic segment spans residues 2–81; it reads STIKPSPSNN…WFSFREISYR (80 aa). The span at 15–24 shows a compositional bias: basic residues; it reads VRSRPRRKSS. A phosphoserine mark is found at serine 23 and serine 24. Residues 82–102 form a helical membrane-spanning segment; the sequence is HAWIAPLMILIAVYSAYFTSG. A glycan (N-linked (GlcNAc...) asparagine) is linked at asparagine 103. Topologically, residues 103–130 are lumenal; sequence NTTKTNVLHRFVAVSYQIGDTNAYGKGI. Residues 131–155 form a helical membrane-spanning segment; sequence NDLCFVFYYMIFFTFLREFLMDVVI. The Cytoplasmic portion of the chain corresponds to 156 to 172; it reads RPFAIRLHVTSKHRIKR. The TLC domain maps to 168-385; the sequence is HRIKRIMEQM…FRVLYRILWR (218 aa). Fumonisin B1-binding residues include arginine 169, arginine 172, and tyrosine 182. Residues 173-194 traverse the membrane as a helical segment; the sequence is IMEQMYAIFYTGVSGPFGIYCM. Over 195–217 the chain is Lumenal; sequence YHSDLWFFNTKAMYRTYPDFTNP. Residues 218–240 form a helical membrane-spanning segment; that stretch reads FLFKVFYLGQAAFWAQQACILVL. Residues tyrosine 224 and tryptophan 231 each coordinate hexacosanoate. Residue tryptophan 231 coordinates fumonisin B1. Position 231 (tryptophan 231) interacts with hexacosanoyl-CoA. At 241 to 249 the chain is on the cytoplasmic side; sequence QLEKPRKDH. Residues 250–268 form a helical membrane-spanning segment; the sequence is NELTFHHIVTLLLIWSSYV. Histidine 255 is a binding site for fumonisin B1. Positions 255, 259, 262, 263, 265, 266, 269, 271, 274, 275, 278, 279, 282, 283, and 286 each coordinate hexacosanoate. Hexacosanoyl-CoA-binding residues include histidine 255, threonine 259, and leucine 262. Positions 265 and 266 each coordinate hexacosanoyl-CoA. Residues 269–273 are Lumenal-facing; that stretch reads FHFTK. Hexacosanoyl-CoA contacts are provided by phenylalanine 271, methionine 274, glycine 275, isoleucine 278, tyrosine 279, and methionine 282. Residues 274-295 traverse the membrane as a helical segment; sequence MGLPIYITMDVSDFLLSFSKTL. Fumonisin B1-binding residues include aspartate 286, leucine 289, lysine 293, asparagine 296, tyrosine 297, alanine 303, phenylalanine 304, phenylalanine 307, and tryptophan 314. Hexacosanoyl-CoA contacts are provided by aspartate 286, leucine 289, lysine 293, and asparagine 296. Residues 296-305 lie on the Cytoplasmic side of the membrane; the sequence is NYLDSGLAFF. The helical transmembrane segment at 306–334 threads the bilayer; sequence SFAIFVVAWIYLRHYINLKILWSVLTQFR. Phenylalanine 307 is a binding site for hexacosanoyl-CoA. Hexacosanoate-binding residues include arginine 318, phenylalanine 343, tyrosine 348, isoleucine 352, serine 353, isoleucine 356, valine 357, leucine 360, isoleucine 361, and tryptophan 371. Arginine 318 is a binding site for hexacosanoyl-CoA. At 335-353 the chain is on the lumenal side; that stretch reads TEGNYVLNFATQQYKCWIS. Residues tyrosine 348, isoleucine 352, serine 353, isoleucine 356, valine 357, and leucine 360 each contribute to the hexacosanoyl-CoA site. Residues 354-382 traverse the membrane as a helical segment; sequence LPIVFVLIGALQLVNLYWLFLIFRVLYRI. The fumonisin B1 site is built by tryptophan 371, isoleucine 375, valine 378, isoleucine 382, and arginine 385. Tryptophan 371 is a hexacosanoyl-CoA binding site. The Cytoplasmic segment spans residues 383–418; that stretch reads LWRGILKDDRSDSESDEESDESSTTPTDSTPTKKDI. A disordered region spans residues 390–418; sequence DDRSDSESDEESDESSTTPTDSTPTKKDI.

Belongs to the sphingosine N-acyltransferase family. Component of the ceramide synthase complex composed of at least LAC1, LAG1 and LIP1. Forms a heterotetrameric complex, where one unit of the LIP1 homodimer interacts with LAC1 and the other with either LAC1 or LAG1. In terms of processing, phosphorylated; phosphorylation is induced upon disruption of sphingolipid synthesis. Phosphorylation is inhibited by exogenous addition of phytosphingosine.

The protein resides in the endoplasmic reticulum membrane. It catalyses the reaction a very long-chain fatty acyl-CoA + a sphingoid base = an N-(very-long-chain fatty acyl)-sphingoid base + CoA + H(+). The enzyme catalyses hexacosanoyl-CoA + sphinganine = N-hexacosanoylsphinganine + CoA + H(+). It carries out the reaction eicosanoyl-CoA + sphinganine = N-eicosanoylsphinganine + CoA + H(+). The catalysed reaction is a fatty acyl-CoA + sphinganine = an N-acylsphinganine + CoA + H(+). It catalyses the reaction (4R)-hydroxysphinganine + a fatty acyl-CoA = an N-acyl-(4R)-4-hydroxysphinganine + CoA + H(+). It participates in lipid metabolism; sphingolipid metabolism. Its activity is regulated as follows. As part of the ceramide synthase complex, inhibited by the sphinganine analog mycotoxin, fumonisin B1 (FB1). Activated by ACB1, as part of the ceramide synthase complex. Functionally, component of the ceramide synthase complex that catalyzes the transfer of the acyl chain from acyl-CoA to a sphingoid base, with high selectivity toward hexacosanoyl-CoA (C26:0-CoA). N-acylates sphinganine and phytosphingosine bases to form dihydroceramides and phytoceramides, respectively. Redundant with LAG1. Facilitates ER-to-Golgi transport of GPI-anchored proteins. Has a lower affinity for phytosphingosine (PHS) than dihydrosphingosine (DHS); PHS is required for the synthesis of phytoceramides and the formation of nuclear envelopes. Along with LAG1, plays a role in pheromone-induced MAP kinase-activation of mating and formation of diploid cells. May also play a role, together with LAG1, in the polarized membrane distribution of phosphatidylinositol 4,5 biphosphate required for STE5 localization to the plasma membrane. The polypeptide is Ceramide synthase LAC1 (LAC1) (Saccharomyces cerevisiae (strain ATCC 204508 / S288c) (Baker's yeast)).